The sequence spans 292 residues: AKT-interacting protein (292 aa).

The disordered stretch occupies residues 1–64; it reads MNPFWNMSSA…ISPSPSVQPT (64 aa). A compositionally biased stretch (basic and acidic residues) spans 14–23; it reads KRSDNDEKIA. A UBC core domain is found at 75–223; sequence YLEYSLLAEF…VVDSVKLCNS (149 aa). Positions 273-292 are disordered; sequence SWVKPGSVLPFSKEENSLQT.

The protein belongs to the ubiquitin-conjugating enzyme family. FTS subfamily.

The protein resides in the cytoplasm. Its subcellular location is the cell membrane. May function to promote vesicle trafficking and/or fusion. May also regulate apoptosis. This is AKT-interacting protein (aktip) from Xenopus tropicalis (Western clawed frog).